A 423-amino-acid polypeptide reads, in one-letter code: Gamma-glutamyl phosphate reductase (423 aa).

This sequence belongs to the gamma-glutamyl phosphate reductase family.

The protein resides in the cytoplasm. The catalysed reaction is L-glutamate 5-semialdehyde + phosphate + NADP(+) = L-glutamyl 5-phosphate + NADPH + H(+). It participates in amino-acid biosynthesis; L-proline biosynthesis; L-glutamate 5-semialdehyde from L-glutamate: step 2/2. Functionally, catalyzes the NADPH-dependent reduction of L-glutamate 5-phosphate into L-glutamate 5-semialdehyde and phosphate. The product spontaneously undergoes cyclization to form 1-pyrroline-5-carboxylate. This Paraburkholderia phytofirmans (strain DSM 17436 / LMG 22146 / PsJN) (Burkholderia phytofirmans) protein is Gamma-glutamyl phosphate reductase.